A 529-amino-acid polypeptide reads, in one-letter code: HTH-type transcriptional activator Btr (529 aa).

Residues 182-201 (LAQLSQMAGISAKHYSESFK) constitute a DNA-binding region (H-T-H motif). In terms of domain architecture, Fe/B12 periplasmic-binding spans 268–528 (KIAAYGRGTM…QTVSLLSGDC (261 aa)).

In terms of assembly, binds with high affinity to both apo-bacillibactin and iron-bacillibactin.

It is found in the cytoplasm. In iron-limited conditions, activates expression of the feuABCybbA operon, which encodes the bacillibactin uptake system. Acts by binding directly to a conserved direct repeat element upstream of the feuA promoter. Activity is increased in the presence of bacillibactin. The polypeptide is HTH-type transcriptional activator Btr (btr) (Bacillus subtilis (strain 168)).